The chain runs to 124 residues: uncharacterized protein (124 aa).

Disordered stretches follow at residues 1 to 31 (MAQH…TMKP) and 59 to 124 (EDAR…YPQP). Polar residues-rich tracts occupy residues 65-86 (GMSS…SDAA) and 98-124 (TGEQ…YPQP).

This is an uncharacterized protein from Bos taurus (Bovine).